Reading from the N-terminus, the 1335-residue chain is Aldehyde oxidase 2 (1335 aa).

Positions 8–95 (DVLVFFVNGR…GAAVTTVEGV (88 aa)) constitute a 2Fe-2S ferredoxin-type domain. [2Fe-2S] cluster is bound by residues C47, C52, C55, and C77. Residue Q116 participates in Mo-molybdopterin binding. 4 residues coordinate [2Fe-2S] cluster: C117, C120, C152, and C154. A Mo-molybdopterin-binding site is contributed by C154. An FAD-binding PCMH-type domain is found at 242 to 427 (FRGDRVTWVS…ESVHIPHSQK (186 aa)). Residues 270–277 (LVLGNTAL), A351, S360, H364, D373, and L417 each bind FAD. Residues 821 to 822 (GF), 1103 to 1106 (ASVG), Q1218, and L1285 contribute to the Mo-molybdopterin site. Catalysis depends on E1287, which acts as the Proton acceptor; for azaheterocycle hydroxylase activity.

This sequence belongs to the xanthine dehydrogenase family. As to quaternary structure, homodimer. It depends on [2Fe-2S] cluster as a cofactor. The cofactor is FAD. Requires Mo-molybdopterin as cofactor. In terms of tissue distribution, detected in kidney, Harderian gland and olfactory mucosa.

The protein resides in the cytoplasm. It carries out the reaction an aldehyde + O2 + H2O = a carboxylate + H2O2 + H(+). In terms of biological role, oxidase with broad substrate specificity, oxidizing aromatic azaheterocycles, such as phthalazine, as well as aldehydes, such as benzaldehyde and retinal. The protein is Aldehyde oxidase 2 (AOX2) of Cavia porcellus (Guinea pig).